Here is a 437-residue protein sequence, read N- to C-terminus: Probable D-serine dehydratase (437 aa).

The residue at position 106 (lysine 106) is an N6-(pyridoxal phosphate)lysine.

This sequence belongs to the serine/threonine dehydratase family. DsdA subfamily. Requires pyridoxal 5'-phosphate as cofactor.

The catalysed reaction is D-serine = pyruvate + NH4(+). The protein is Probable D-serine dehydratase of Hahella chejuensis (strain KCTC 2396).